The chain runs to 195 residues: MARTARVERKTKESHVLIELDLDGTGLASAETGVPFFDHMMEQLGKHGGFDLTVRTEGDLHIDAHHTVEDTAIAFGTALREALGDKAGIRRFGDATVPLDEALVQSAVDLSGRPYCVHVEPELVGLIGTYDTTLTRHIFESITASARIALHVRVLSGRNAHHVVEAQFKSVARAMRDAVALDARVAGVPSTKGVL.

It belongs to the imidazoleglycerol-phosphate dehydratase family.

The protein resides in the cytoplasm. It catalyses the reaction D-erythro-1-(imidazol-4-yl)glycerol 3-phosphate = 3-(imidazol-4-yl)-2-oxopropyl phosphate + H2O. It participates in amino-acid biosynthesis; L-histidine biosynthesis; L-histidine from 5-phospho-alpha-D-ribose 1-diphosphate: step 6/9. The sequence is that of Imidazoleglycerol-phosphate dehydratase from Parafrankia sp. (strain EAN1pec).